Here is a 400-residue protein sequence, read N- to C-terminus: Enoyl-[acyl-carrier-protein] reductase [NADH] 2 (400 aa).

NAD(+) contacts are provided by residues 48–53 (GASSGF), 75–76 (FE), 112–113 (DA), and 141–142 (LA). Residue Tyr228 coordinates substrate. Tyr238 functions as the Proton donor in the catalytic mechanism. NAD(+) contacts are provided by residues Lys247 and 276-278 (LVT).

Belongs to the TER reductase family. In terms of assembly, monomer.

The catalysed reaction is a 2,3-saturated acyl-[ACP] + NAD(+) = a (2E)-enoyl-[ACP] + NADH + H(+). It functions in the pathway lipid metabolism; fatty acid biosynthesis. Involved in the final reduction of the elongation cycle of fatty acid synthesis (FAS II). Catalyzes the reduction of a carbon-carbon double bond in an enoyl moiety that is covalently linked to an acyl carrier protein (ACP). In Vibrio vulnificus (strain YJ016), this protein is Enoyl-[acyl-carrier-protein] reductase [NADH] 2.